A 604-amino-acid polypeptide reads, in one-letter code: Inositol-3-phosphate synthase 1 (604 aa).

The NAD(+) site is built by G88, G89, N90, N91, D163, S198, V199, Q210, R213, S251, G252, N253, T254, S303, D327, L328, T330, N361, N362, D363, K376, G456, D457, D485, and S486.

This sequence belongs to the myo-inositol 1-phosphate synthase family. The cofactor is NAD(+).

It carries out the reaction D-glucose 6-phosphate = 1D-myo-inositol 3-phosphate. It functions in the pathway polyol metabolism; myo-inositol biosynthesis; myo-inositol from D-glucose 6-phosphate: step 1/2. Its function is as follows. Key enzyme in myo-inositol biosynthesis pathway that catalyzes the conversion of glucose 6-phosphate to 1-myo-inositol 1-phosphate in a NAD-dependent manner. Rate-limiting enzyme in the synthesis of all inositol-containing compounds. De novo-synthesized myo-inositol is essential for incorporation into GPI (glycosylphosphatidylinositol) glycolipids during intra-erythrocytic development. The chain is Inositol-3-phosphate synthase 1 from Plasmodium falciparum (isolate 3D7).